A 270-amino-acid polypeptide reads, in one-letter code: Phosphatidylglycerol--prolipoprotein diacylglyceryl transferase (270 aa).

The next 4 membrane-spanning stretches (helical) occupy residues 19–39 (FPVYWYGIIIGTGVLLGLWLA), 56–76 (LVLIAVPIAILFARMYYVIFE), 92–112 (QGGLAIHGGLIGAVITGILFA), and 116–136 (GVSFWKLADIAAPSILLGQAI). Arg138 is an a 1,2-diacyl-sn-glycero-3-phospho-(1'-sn-glycerol) binding site. A run of 3 helical transmembrane segments spans residues 178-198 (HPTFLYESLWNFAGVILLLAL), 206-226 (GELFFTYLIWYSIGRFFVEGL), and 236-256 (LRIAQVMSIGLVVISIIFIIV).

Belongs to the Lgt family.

Its subcellular location is the cell membrane. It carries out the reaction L-cysteinyl-[prolipoprotein] + a 1,2-diacyl-sn-glycero-3-phospho-(1'-sn-glycerol) = an S-1,2-diacyl-sn-glyceryl-L-cysteinyl-[prolipoprotein] + sn-glycerol 1-phosphate + H(+). It functions in the pathway protein modification; lipoprotein biosynthesis (diacylglyceryl transfer). Its function is as follows. Catalyzes the transfer of the diacylglyceryl group from phosphatidylglycerol to the sulfhydryl group of the N-terminal cysteine of a prolipoprotein, the first step in the formation of mature lipoproteins. The chain is Phosphatidylglycerol--prolipoprotein diacylglyceryl transferase from Bacillus cereus (strain ZK / E33L).